Reading from the N-terminus, the 137-residue chain is Large-conductance mechanosensitive channel (137 aa).

A run of 2 helical transmembrane segments spans residues Ala9–Phe29 and Ile79–Ile99.

This sequence belongs to the MscL family. As to quaternary structure, homopentamer.

It localises to the cell inner membrane. Functionally, channel that opens in response to stretch forces in the membrane lipid bilayer. May participate in the regulation of osmotic pressure changes within the cell. This is Large-conductance mechanosensitive channel from Pseudomonas fluorescens (strain Pf0-1).